The chain runs to 724 residues: Degenerin mec-10 (724 aa).

The span at 1–15 shows a compositional bias: polar residues; the sequence is MNRNPRMSKFQPNPR. The tract at residues 1-22 is disordered; sequence MNRNPRMSKFQPNPRSRSRFQD. Over 1-122 the chain is Cytoplasmic; the sequence is MNRNPRMSKF…GQAPNSLYRA (122 aa). The helical transmembrane segment at 123 to 143 threads the bilayer; sequence AWVFLLLICAIQFINQAVAVI. The Extracellular segment spans residues 144–684; it reads QKYQKMDKIT…FGGHLGLWSG (541 aa). The tract at residues 229 to 265 is disordered; sequence KRGAGEKGTFEPANSACECDEEDGSNECEERSTEKPS. A compositionally biased stretch (acidic residues) spans 246 to 255; sequence ECDEEDGSNE. The segment covering 256–265 has biased composition (basic and acidic residues); it reads CEERSTEKPS. N-linked (GlcNAc...) asparagine glycosylation is found at Asn293, Asn369, Asn463, Asn605, and Asn624. A helical membrane pass occupies residues 685 to 705; the sequence is VSVMTCCEFVCLAFELIYMAI. Residues 706–724 lie on the Cytoplasmic side of the membrane; sequence AHHINQQRIRRRENAANEY.

Belongs to the amiloride-sensitive sodium channel (TC 1.A.6) family. As to quaternary structure, component of a non-voltage-gated amiloride-sensitive cation channel complex (also called the degenerin channel complex) composed of at least the mec-2, mec-4, mec-6 and mec-10 subunits; the complex mediates mechanotransduction in touch cells. Interacts with mec-4 and mec-6.

Its subcellular location is the cell membrane. Functionally, subunit of an amiloride-sensitive cation channel (degenerin channel complex) permeable for sodium, potassium, lithium and N-methylglucamine, and required for mechanosensory transduction (touch sensitivity). Negatively regulates the turning step of male mating behavior. This Caenorhabditis elegans protein is Degenerin mec-10.